A 50-amino-acid polypeptide reads, in one-letter code: Small ribosomal subunit protein eS31 (50 aa).

Positions 22, 25, 40, and 43 each coordinate Zn(2+). The C4-type zinc finger occupies 22–43; that stretch reads CPRCGPGVFMADHGDRWACGKC.

The protein belongs to the eukaryotic ribosomal protein eS31 family. In terms of assembly, part of the 30S ribosomal subunit. The cofactor is Zn(2+).

The sequence is that of Small ribosomal subunit protein eS31 from Pyrococcus furiosus (strain ATCC 43587 / DSM 3638 / JCM 8422 / Vc1).